The chain runs to 477 residues: Tyrosine-protein kinase transforming protein Fes (477 aa).

Residues 49–76 are disordered; that stretch reads GEPPPVLLLQDDRHSTSSSEQEREGGRT. Over residues 58–74 the composition is skewed to basic and acidic residues; it reads QDDRHSTSSSEQEREGG. The 90-residue stretch at 115-204 folds into the SH2 domain; the sequence is WYHGALPRAE…KSGIVLNRAV (90 aa). Positions 216–477 constitute a Protein kinase domain; that stretch reads LVLGEQIGRG…ELQSIRKRHR (262 aa). ATP contacts are provided by residues 222–230 and Lys245; that span reads IGRGNFGEV. The Proton acceptor role is filled by Asp338. Tyr368 bears the Phosphotyrosine; by autocatalysis mark.

This sequence belongs to the protein kinase superfamily. Tyr protein kinase family. Fes/fps subfamily.

It catalyses the reaction L-tyrosyl-[protein] + ATP = O-phospho-L-tyrosyl-[protein] + ADP + H(+). The protein is Tyrosine-protein kinase transforming protein Fes (V-FES) of Feline sarcoma virus (strain Snyder-Theilen).